A 131-amino-acid chain; its full sequence is Profilin-3 (131 aa).

The protein belongs to the profilin family. In terms of assembly, occurs in many kinds of cells as a complex with monomeric actin in a 1:1 ratio.

The protein resides in the cytoplasm. The protein localises to the cytoskeleton. Functionally, binds to actin and affects the structure of the cytoskeleton. At high concentrations, profilin prevents the polymerization of actin, whereas it enhances it at low concentrations. By binding to PIP2, it inhibits the formation of IP3 and DG. The polypeptide is Profilin-3 (PRO3) (Triticum aestivum (Wheat)).